We begin with the raw amino-acid sequence, 183 residues long: Translation initiation factor IF-3 (183 aa).

It belongs to the IF-3 family. As to quaternary structure, monomer.

The protein localises to the cytoplasm. In terms of biological role, IF-3 binds to the 30S ribosomal subunit and shifts the equilibrium between 70S ribosomes and their 50S and 30S subunits in favor of the free subunits, thus enhancing the availability of 30S subunits on which protein synthesis initiation begins. The protein is Translation initiation factor IF-3 of Aliivibrio salmonicida (strain LFI1238) (Vibrio salmonicida (strain LFI1238)).